The primary structure comprises 320 residues: 3-O-acetylpapaveroxine carboxylesterase CXE1 (320 aa).

An Involved in the stabilization of the negatively charged intermediate by the formation of the oxyanion hole motif is present at residues 72 to 74; it reads HGG. Residues serine 158, aspartate 262, and histidine 292 contribute to the active site.

The protein belongs to the 'GDXG' lipolytic enzyme family.

It catalyses the reaction 3-O-acetylpapaveroxine + H2O = narcotine hemiacetal + acetate + H(+). Its pathway is alkaloid biosynthesis. Carboxylesterase involved in the biosynthesis of the benzylisoquinoline alkaloid noscapine. Converts 3-O-acetylpapaveroxine to papaveroxine which spontaneously rearranges to narcotine hemiacetal. The protein is 3-O-acetylpapaveroxine carboxylesterase CXE1 of Papaver somniferum (Opium poppy).